A 166-amino-acid polypeptide reads, in one-letter code: MEGWRISHLNEHKHERTIYVDADACPVKDEILSVASQFQIPVTFIASYEHFQTKRSPLEDWRFVDTHKEAADLVIANSVAAHDIVVTQDIGLASLLLPRQVIVLSERGRMYTNETIDFDLERRHVSSKQRRKGVYGKGPKKLLEEDKKRFIAQLQKILSNHEGFLN.

Belongs to the UPF0178 family.

The polypeptide is UPF0178 protein BPUM_2255 (Bacillus pumilus (strain SAFR-032)).